The following is a 122-amino-acid chain: UPF0231 protein VSAL_I2591 (122 aa).

This sequence belongs to the UPF0231 family.

The polypeptide is UPF0231 protein VSAL_I2591 (Aliivibrio salmonicida (strain LFI1238) (Vibrio salmonicida (strain LFI1238))).